The sequence spans 403 residues: Phosphopentomutase (403 aa).

Mn(2+) is bound by residues D13, D298, H303, D339, H340, and H351.

This sequence belongs to the phosphopentomutase family. Mn(2+) serves as cofactor.

It localises to the cytoplasm. It carries out the reaction 2-deoxy-alpha-D-ribose 1-phosphate = 2-deoxy-D-ribose 5-phosphate. The enzyme catalyses alpha-D-ribose 1-phosphate = D-ribose 5-phosphate. It functions in the pathway carbohydrate degradation; 2-deoxy-D-ribose 1-phosphate degradation; D-glyceraldehyde 3-phosphate and acetaldehyde from 2-deoxy-alpha-D-ribose 1-phosphate: step 1/2. Functionally, isomerase that catalyzes the conversion of deoxy-ribose 1-phosphate (dRib-1-P) and ribose 1-phosphate (Rib-1-P) to deoxy-ribose 5-phosphate (dRib-5-P) and ribose 5-phosphate (Rib-5-P), respectively. This is Phosphopentomutase from Streptococcus thermophilus (strain CNRZ 1066).